The primary structure comprises 267 residues: Probable beta-lactamase YbxI (267 aa).

Residues 1 to 23 (MKKWIYVVLVLSIAGIGGFSVHA) form the signal peptide. Residue S76 is the Acyl-ester intermediate of the active site. The residue at position 79 (K79) is an N6-carboxylysine. Residue 214 to 216 (KTG) coordinates substrate.

This sequence belongs to the class-D beta-lactamase family.

It catalyses the reaction a beta-lactam + H2O = a substituted beta-amino acid. The protein is Probable beta-lactamase YbxI (ybxI) of Bacillus subtilis (strain 168).